The primary structure comprises 325 residues: Biotin synthase (325 aa).

The 230-residue stretch at 52–281 (YQKDDVVLCS…AKPLLICGGR (230 aa)) folds into the Radical SAM core domain. Positions 70, 74, and 77 each coordinate [4Fe-4S] cluster. Residues Ser-114, Cys-146, and Cys-206 each coordinate [2Fe-2S] cluster.

Belongs to the radical SAM superfamily. Biotin synthase family. As to quaternary structure, homodimer. It depends on [4Fe-4S] cluster as a cofactor. [2Fe-2S] cluster is required as a cofactor.

It catalyses the reaction (4R,5S)-dethiobiotin + (sulfur carrier)-SH + 2 reduced [2Fe-2S]-[ferredoxin] + 2 S-adenosyl-L-methionine = (sulfur carrier)-H + biotin + 2 5'-deoxyadenosine + 2 L-methionine + 2 oxidized [2Fe-2S]-[ferredoxin]. The protein operates within cofactor biosynthesis; biotin biosynthesis; biotin from 7,8-diaminononanoate: step 2/2. Catalyzes the conversion of dethiobiotin (DTB) to biotin by the insertion of a sulfur atom into dethiobiotin via a radical-based mechanism. This is Biotin synthase from Syntrophus aciditrophicus (strain SB).